Consider the following 209-residue polypeptide: Protein GrpE (209 aa).

Positions 1–13 (MSNDSSKAKQNQV) are enriched in polar residues. The disordered stretch occupies residues 1 to 33 (MSNDSSKAKQNQVDEAVEGEILTESEVETGNDE). Over residues 15-31 (EAVEGEILTESEVETGN) the composition is skewed to acidic residues.

This sequence belongs to the GrpE family. Homodimer.

It localises to the cytoplasm. Participates actively in the response to hyperosmotic and heat shock by preventing the aggregation of stress-denatured proteins, in association with DnaK and GrpE. It is the nucleotide exchange factor for DnaK and may function as a thermosensor. Unfolded proteins bind initially to DnaJ; upon interaction with the DnaJ-bound protein, DnaK hydrolyzes its bound ATP, resulting in the formation of a stable complex. GrpE releases ADP from DnaK; ATP binding to DnaK triggers the release of the substrate protein, thus completing the reaction cycle. Several rounds of ATP-dependent interactions between DnaJ, DnaK and GrpE are required for fully efficient folding. The polypeptide is Protein GrpE (Shewanella woodyi (strain ATCC 51908 / MS32)).